Here is a 510-residue protein sequence, read N- to C-terminus: NAD(P)H-quinone oxidoreductase subunit 2 A, chloroplastic (510 aa).

13 consecutive transmembrane segments (helical) span residues leucine 24 to leucine 44, isoleucine 57 to phenylalanine 77, isoleucine 99 to isoleucine 119, methionine 124 to cysteine 144, leucine 149 to tyrosine 169, tyrosine 183 to glycine 203, proline 227 to alanine 247, tryptophan 295 to isoleucine 315, methionine 323 to aspartate 343, tyrosine 354 to leucine 374, alanine 395 to phenylalanine 415, leucine 418 to leucine 438, and methionine 484 to isoleucine 504.

The protein belongs to the complex I subunit 2 family. In terms of assembly, NDH is composed of at least 16 different subunits, 5 of which are encoded in the nucleus.

Its subcellular location is the plastid. The protein localises to the chloroplast thylakoid membrane. It carries out the reaction a plastoquinone + NADH + (n+1) H(+)(in) = a plastoquinol + NAD(+) + n H(+)(out). The enzyme catalyses a plastoquinone + NADPH + (n+1) H(+)(in) = a plastoquinol + NADP(+) + n H(+)(out). NDH shuttles electrons from NAD(P)H:plastoquinone, via FMN and iron-sulfur (Fe-S) centers, to quinones in the photosynthetic chain and possibly in a chloroplast respiratory chain. The immediate electron acceptor for the enzyme in this species is believed to be plastoquinone. Couples the redox reaction to proton translocation, and thus conserves the redox energy in a proton gradient. The chain is NAD(P)H-quinone oxidoreductase subunit 2 A, chloroplastic from Solanum bulbocastanum (Wild potato).